Reading from the N-terminus, the 315-residue chain is MNYLDFESKIKEIEDKITSLSHVYEDEKTESEIKKLGKKRLELMESTYSKLTDWQVVQLSRHPDRPYFKDLLSLVFTDFQELHGDRAFGDDLAVIGGLAKLNNKPVMVIGQEKGRDTKSKIKHNFGMMHPEGYRKALRLMKLAEKFNMPIVTFIDTPGAYPGIKAEERGQSEAIARNLLEMSALKVPVVCIVIGEGCSGGALGIGVGDRLLMLQYSYFATISPEGCASILHKTAEKASEVTQMMNITSGRLKELEIVDAVIPEPLGGAHRDYDTTAANIRKAVAAELKVLSEMTVEERNAKRYDKLMSFGRFKEA.

The region spanning 36-289 (LGKKRLELME…RKAVAAELKV (254 aa)) is the CoA carboxyltransferase C-terminal domain.

This sequence belongs to the AccA family. Acetyl-CoA carboxylase is a heterohexamer composed of biotin carboxyl carrier protein (AccB), biotin carboxylase (AccC) and two subunits each of ACCase subunit alpha (AccA) and ACCase subunit beta (AccD).

The protein localises to the cytoplasm. The catalysed reaction is N(6)-carboxybiotinyl-L-lysyl-[protein] + acetyl-CoA = N(6)-biotinyl-L-lysyl-[protein] + malonyl-CoA. It participates in lipid metabolism; malonyl-CoA biosynthesis; malonyl-CoA from acetyl-CoA: step 1/1. Functionally, component of the acetyl coenzyme A carboxylase (ACC) complex. First, biotin carboxylase catalyzes the carboxylation of biotin on its carrier protein (BCCP) and then the CO(2) group is transferred by the carboxyltransferase to acetyl-CoA to form malonyl-CoA. The protein is Acetyl-coenzyme A carboxylase carboxyl transferase subunit alpha of Francisella philomiragia subsp. philomiragia (strain ATCC 25017 / CCUG 19701 / FSC 153 / O#319-036).